A 2313-amino-acid chain; its full sequence is Serine/threonine-protein kinase smg-1 (2313 aa).

Residues 779-791 show a composition bias toward basic and acidic residues; the sequence is NRKSSDKKPKSTT. The segment at 779 to 798 is disordered; sequence NRKSSDKKPKSTTEDVPPPA. Residues 1045–1528 form the FAT domain; sequence ARERLQLVES…VFQVVSGAAS (484 aa). Residues 1478 to 1514 form an HEAT repeat; that stretch reads VHVWKEILPQLFARLSHPSDHIRKTLVDLISRVCTAA. The 346-residue stretch at 1746–2091 folds into the PI3K/PI4K catalytic domain; the sequence is VADNVTILPT…DTIELFQLRV (346 aa). A G-loop region spans residues 1752 to 1758; the sequence is ILPTKTR. The tract at residues 1954 to 1962 is catalytic loop; the sequence is GLGDRHLDN. The segment at 1974–1998 is activation loop; sequence HIDYNICFDKGKILRIPETVPFRLS. The region spanning 2281-2313 is the FATC domain; the sequence is RKLSPREEADVLIAEATSSANLAQMYEGWTAWV.

Belongs to the PI3/PI4-kinase family. In terms of assembly, component of a post-splicing multiprotein NMD complex. The cofactor is Mn(2+).

It is found in the cytoplasm. It carries out the reaction L-seryl-[protein] + ATP = O-phospho-L-seryl-[protein] + ADP + H(+). It catalyses the reaction L-threonyl-[protein] + ATP = O-phospho-L-threonyl-[protein] + ADP + H(+). Functionally, serine/threonine protein kinase involved in mRNA surveillance. Recognizes the substrate consensus sequence [ST]-Q. Involved in nonsense-mediated decay (NMD) of mRNAs containing premature stop codons by phosphorylating smg-2. The sequence is that of Serine/threonine-protein kinase smg-1 (smg-1) from Caenorhabditis briggsae.